A 211-amino-acid chain; its full sequence is FMN-dependent NADH:quinone oxidoreductase (211 aa).

Residues Ser10, 16-18 (STS), and 138-141 (TQGG) each bind FMN.

The protein belongs to the azoreductase type 1 family. In terms of assembly, homodimer. FMN serves as cofactor.

It catalyses the reaction 2 a quinone + NADH + H(+) = 2 a 1,4-benzosemiquinone + NAD(+). The enzyme catalyses N,N-dimethyl-1,4-phenylenediamine + anthranilate + 2 NAD(+) = 2-(4-dimethylaminophenyl)diazenylbenzoate + 2 NADH + 2 H(+). In terms of biological role, quinone reductase that provides resistance to thiol-specific stress caused by electrophilic quinones. Functionally, also exhibits azoreductase activity. Catalyzes the reductive cleavage of the azo bond in aromatic azo compounds to the corresponding amines. The protein is FMN-dependent NADH:quinone oxidoreductase of Frankia alni (strain DSM 45986 / CECT 9034 / ACN14a).